Reading from the N-terminus, the 368-residue chain is Peptide chain release factor 2 (368 aa).

At Gln250 the chain carries N5-methylglutamine.

It belongs to the prokaryotic/mitochondrial release factor family. Post-translationally, methylated by PrmC. Methylation increases the termination efficiency of RF2.

The protein resides in the cytoplasm. Its function is as follows. Peptide chain release factor 2 directs the termination of translation in response to the peptide chain termination codons UGA and UAA. This chain is Peptide chain release factor 2, found in Chlamydia trachomatis serovar L2b (strain UCH-1/proctitis).